The following is a 305-amino-acid chain: Ribosomal RNA small subunit methyltransferase H (305 aa).

S-adenosyl-L-methionine is bound by residues 33-35, Asp-52, Asp-97, and Gln-104; that span reads GGH.

Belongs to the methyltransferase superfamily. RsmH family.

The protein resides in the cytoplasm. It carries out the reaction cytidine(1402) in 16S rRNA + S-adenosyl-L-methionine = N(4)-methylcytidine(1402) in 16S rRNA + S-adenosyl-L-homocysteine + H(+). Specifically methylates the N4 position of cytidine in position 1402 (C1402) of 16S rRNA. This Campylobacter lari (strain RM2100 / D67 / ATCC BAA-1060) protein is Ribosomal RNA small subunit methyltransferase H.